The following is a 78-amino-acid chain: RNA-binding protein Hfq (78 aa).

One can recognise a Sm domain in the interval 10-69 (DPFLNALRKEHVPVSIYLVNGIKLQGNIESFDQYVVLLRNTVTQMVYKHAISTVVPARPV).

It belongs to the Hfq family. In terms of assembly, homohexamer.

In terms of biological role, RNA chaperone that binds small regulatory RNA (sRNAs) and mRNAs to facilitate mRNA translational regulation in response to envelope stress, environmental stress and changes in metabolite concentrations. Also binds with high specificity to tRNAs. The sequence is that of RNA-binding protein Hfq from Paraburkholderia phytofirmans (strain DSM 17436 / LMG 22146 / PsJN) (Burkholderia phytofirmans).